Reading from the N-terminus, the 234-residue chain is Urease accessory protein UreF (234 aa).

Belongs to the UreF family. In terms of assembly, ureD, UreF and UreG form a complex that acts as a GTP-hydrolysis-dependent molecular chaperone, activating the urease apoprotein by helping to assemble the nickel containing metallocenter of UreC. The UreE protein probably delivers the nickel.

The protein resides in the cytoplasm. In terms of biological role, required for maturation of urease via the functional incorporation of the urease nickel metallocenter. In Kocuria rhizophila (strain ATCC 9341 / DSM 348 / NBRC 103217 / DC2201), this protein is Urease accessory protein UreF.